Here is a 457-residue protein sequence, read N- to C-terminus: Na(+)/H(+) antiporter NhaA (457 aa).

11 helical membrane passes run 33–53, 76–96, 114–134, 142–162, 172–192, 196–216, 235–255, 308–328, 349–369, 385–405, and 419–439; these read ASGI…NSPL, FSLA…VVGM, LLPL…FLAF, AGWG…LTLL, VFVT…IALF, GLQL…ALMS, YALH…GLAI, FVHA…ALAN, TALA…WIAV, LIGV…IAGL, and VGIL…LRLT.

It belongs to the NhaA Na(+)/H(+) (TC 2.A.33) antiporter family.

It is found in the cell inner membrane. The catalysed reaction is Na(+)(in) + 2 H(+)(out) = Na(+)(out) + 2 H(+)(in). Functionally, na(+)/H(+) antiporter that extrudes sodium in exchange for external protons. This is Na(+)/H(+) antiporter NhaA from Anaeromyxobacter sp. (strain Fw109-5).